A 212-amino-acid polypeptide reads, in one-letter code: Nuclear phosphoprotein UL3 homolog (212 aa).

It belongs to the alphaherpesvirinae HHV-1 UL3 family. In terms of processing, phosphorylated.

Its subcellular location is the host nucleus. This is Nuclear phosphoprotein UL3 homolog from Equus caballus (Horse).